Reading from the N-terminus, the 230-residue chain is MKIGIIGAMEPEVAILREQISNMETLSIAGCEFYRGELAGHDVILTRSGIGKVAASIATTILLDRYAPDCVINTGSAGGFDPELRVGDVVISDEVRHHDVNVTAFGYEPGQLPQQPAAFISDSKLIEVATQVMHQLPELQSRIGLICTGDQFMCDPDHIEQVRQTFPAMMAAEMEAAAIAQVCHQFKVPFVVIRSLSDIAGTESPSTFEEYLEVAAKNSSAMIVAMLKQL.

E12 acts as the Proton acceptor in catalysis. Residues G78, M153, and 174-175 (ME) contribute to the substrate site. The active-site Proton donor is D198.

It belongs to the PNP/UDP phosphorylase family. MtnN subfamily.

The enzyme catalyses S-adenosyl-L-homocysteine + H2O = S-(5-deoxy-D-ribos-5-yl)-L-homocysteine + adenine. It catalyses the reaction S-methyl-5'-thioadenosine + H2O = 5-(methylsulfanyl)-D-ribose + adenine. The catalysed reaction is 5'-deoxyadenosine + H2O = 5-deoxy-D-ribose + adenine. Its pathway is amino-acid biosynthesis; L-methionine biosynthesis via salvage pathway; S-methyl-5-thio-alpha-D-ribose 1-phosphate from S-methyl-5'-thioadenosine (hydrolase route): step 1/2. Functionally, catalyzes the irreversible cleavage of the glycosidic bond in both 5'-methylthioadenosine (MTA) and S-adenosylhomocysteine (SAH/AdoHcy) to adenine and the corresponding thioribose, 5'-methylthioribose and S-ribosylhomocysteine, respectively. Also cleaves 5'-deoxyadenosine, a toxic by-product of radical S-adenosylmethionine (SAM) enzymes, into 5-deoxyribose and adenine. This Tolumonas auensis (strain DSM 9187 / NBRC 110442 / TA 4) protein is 5'-methylthioadenosine/S-adenosylhomocysteine nucleosidase.